The sequence spans 312 residues: Olfactory receptor 7D2 (312 aa).

Residues 1-25 are Extracellular-facing; that stretch reads MEAGNQTGFLEFILLGLSEDPELQP. Residue N5 is glycosylated (N-linked (GlcNAc...) asparagine). The helical transmembrane segment at 26-46 threads the bilayer; that stretch reads FIFGLFLSMYLVTVLGNLLII. Residues 47–54 are Cytoplasmic-facing; sequence LAISSDSH. The helical transmembrane segment at 55–75 threads the bilayer; sequence LHTPMYFFLSNLSWVDICFST. Over 76–99 the chain is Extracellular; that stretch reads CIVPKMLVNIQTENKAISYMDCLT. Cysteines 97 and 189 form a disulfide. A helical transmembrane segment spans residues 100 to 120; it reads QVYFSMFFPILDTLLLTVMAY. Residues 121–139 are Cytoplasmic-facing; sequence DRFVAVCHPLHYMIIMNPH. The chain crosses the membrane as a helical span at residues 140–160; that stretch reads LCGLLVFVTWLIGVMTSLLHI. Residues 161-197 are Extracellular-facing; the sequence is SLMMHLIFCKDFEIPHFFCELTYILQLACSDTFLNST. A helical membrane pass occupies residues 198 to 217; sequence LIYFMTGVLGVFPLLGIIFS. The Cytoplasmic portion of the chain corresponds to 218 to 237; it reads YSRIASSIRKMSSSGGKQKA. A helical transmembrane segment spans residues 238 to 258; the sequence is LSTCGSHLSVVSLFYGTGIGV. Over 259–271 the chain is Extracellular; sequence HFTSAVTHSSQKI. The helical transmembrane segment at 272-292 threads the bilayer; sequence SVASVMYTVVTPMLNPFIYSL. Over 293–312 the chain is Cytoplasmic; it reads RNKDVKGALGSLLSRAASCL.

Belongs to the G-protein coupled receptor 1 family.

Its subcellular location is the cell membrane. Functionally, odorant receptor. The sequence is that of Olfactory receptor 7D2 (OR7D2) from Homo sapiens (Human).